An 816-amino-acid chain; its full sequence is tRNA(Met) cytidine acetyltransferase TmcA (816 aa).

ATP is bound by residues Q265 and R439. Residues 469–664 enclose the N-acetyltransferase domain; the sequence is ELIRKMEVYL…YTAIVIKPIS (196 aa). Acetyl-CoA is bound by residues 589–591, E629, and R636; that span reads IAT.

It belongs to the TmcA family.

Its subcellular location is the cytoplasm. The enzyme catalyses cytidine(34) in elongator tRNA(Met) + acetyl-CoA + ATP + H2O = N(4)-acetylcytidine(34) in elongator tRNA(Met) + ADP + phosphate + CoA + H(+). The catalysed reaction is a cytidine in RNA + acetyl-CoA + ATP + H2O = an N(4)-acetylcytidine in RNA + ADP + phosphate + CoA + H(+). It carries out the reaction a cytidine in tRNA + acetyl-CoA + ATP + H2O = an N(4)-acetylcytidine in tRNA + ADP + phosphate + CoA + H(+). It catalyses the reaction a cytidine in mRNA + acetyl-CoA + ATP + H2O = an N(4)-acetylcytidine in mRNA + ADP + phosphate + CoA + H(+). In terms of biological role, catalyzes the formation of N(4)-acetylcytidine (ac(4)C) at the wobble position of tRNA(Met), by using acetyl-CoA as an acetyl donor and ATP (or GTP). Catalyzes the formation of 233 N(4)-acetylcytidine (ac(4)C) sites in RNA, on the middle C of a CCG motif. Modifications are found in rRNA, ncRNA, mRNA and tRNA. More acetylation is observed at 85 than at 65 or 75 degrees Celsius. In Pyrococcus furiosus (strain ATCC 43587 / DSM 3638 / JCM 8422 / Vc1), this protein is tRNA(Met) cytidine acetyltransferase TmcA.